A 453-amino-acid chain; its full sequence is tRNA modification GTPase MnmE (453 aa).

(6S)-5-formyl-5,6,7,8-tetrahydrofolate-binding residues include R22, E79, and K119. Positions 215 to 376 constitute a TrmE-type G domain; the sequence is GMKVVIAGRP…LREHLKACMG (162 aa). Residue N225 coordinates K(+). GTP contacts are provided by residues 225-230, 244-250, 269-272, and 334-337; these read NAGKSS, TEIAGTT, DTAG, and NKAD. Position 229 (S229) interacts with Mg(2+). Residues T244, I246, and T249 each contribute to the K(+) site. Residue T250 coordinates Mg(2+). K453 is a binding site for (6S)-5-formyl-5,6,7,8-tetrahydrofolate.

This sequence belongs to the TRAFAC class TrmE-Era-EngA-EngB-Septin-like GTPase superfamily. TrmE GTPase family. Homodimer. Heterotetramer of two MnmE and two MnmG subunits. It depends on K(+) as a cofactor.

The protein resides in the cytoplasm. In terms of biological role, exhibits a very high intrinsic GTPase hydrolysis rate. Involved in the addition of a carboxymethylaminomethyl (cmnm) group at the wobble position (U34) of certain tRNAs, forming tRNA-cmnm(5)s(2)U34. This is tRNA modification GTPase MnmE from Aeromonas hydrophila subsp. hydrophila (strain ATCC 7966 / DSM 30187 / BCRC 13018 / CCUG 14551 / JCM 1027 / KCTC 2358 / NCIMB 9240 / NCTC 8049).